The following is a 1048-amino-acid chain: Bifunctional heparan sulfate N-deacetylase/N-sulfotransferase (1048 aa).

The Cytoplasmic segment spans residues 1 to 172 (MTISGGNQHN…RRCFGINVRR (172 aa)). Residues 173–192 (CVLALLAITMVSIFYYTHYV) traverse the membrane as a helical; Signal-anchor for type II membrane protein segment. A heparan sulfate N-deacetylase region spans residues 192–752 (VDTGVFNGLI…VRHKKIWSKT (561 aa)). The Lumenal portion of the chain corresponds to 193–1048 (DTGVFNGLIQ…WLKDDLSTGT (856 aa)). 2 N-linked (GlcNAc...) asparagine glycosylation sites follow: N388 and N555. The segment at 753-1048 (KNCDSLPKFL…WLKDDLSTGT (296 aa)) is heparan sulfate N-sulfotransferase. Residue K768 is the For sulfotransferase activity of the active site. 768–772 (KTGTT) serves as a coordination point for 3'-phosphoadenylyl sulfate. N823 carries N-linked (GlcNAc...) asparagine glycosylation. S877 provides a ligand contact to 3'-phosphoadenylyl sulfate. A glycan (N-linked (GlcNAc...) asparagine) is linked at N892. Cysteines 983 and 993 form a disulfide. 998–1002 (KGRQY) contacts 3'-phosphoadenylyl sulfate.

Belongs to the sulfotransferase 1 family. NDST subfamily. In terms of assembly, monomer.

The protein resides in the golgi apparatus membrane. It carries out the reaction alpha-D-glucosaminyl-[heparan sulfate](n) + 3'-phosphoadenylyl sulfate = N-sulfo-alpha-D-glucosaminyl-[heparan sulfate](n) + adenosine 3',5'-bisphosphate + 2 H(+). Its pathway is glycan metabolism; heparan sulfate biosynthesis. It functions in the pathway glycan metabolism; heparin biosynthesis. Essential bifunctional enzyme that catalyzes both the N-deacetylation and the N-sulfation of glucosamine (GlcNAc) of the glycosaminoglycan in heparan sulfate. Modifies the GlcNAc-GlcA disaccharide repeating sugar backbone to make N-sulfated heparosan, a prerequisite substrate for later modifications in heparin biosynthesis. Plays a role in diffusion of morphogen wingless (wg) via its role in heparan sulfate proteoglycans (HSPGs) biosynthesis, HSPGs being required for movement of wg morphogens. Required for wg signaling during both embryonic and imaginal disk development. Also required for FGF receptor signaling. This chain is Bifunctional heparan sulfate N-deacetylase/N-sulfotransferase (sfl), found in Drosophila melanogaster (Fruit fly).